The sequence spans 551 residues: Membrane protein insertase YidC (551 aa).

A helical membrane pass occupies residues 3-23 (ANHIRILLLVTIAIMFISLMG). Over residues 33–47 (NTKQQTSATQNNSHY) the composition is skewed to polar residues. The disordered stretch occupies residues 33–59 (NTKQQTSATQNNSHYDNADSSTNTDVT). Residues 50–59 (ADSSTNTDVT) are compositionally biased toward low complexity. Helical transmembrane passes span 361–381 (LVGNWGLAIILVTCLIKLIFY), 431–451 (LSGCLPMLIQIPIFISLYWVL), and 504–524 (VMMFLPVIFTFLFASFPSGLV).

Belongs to the OXA1/ALB3/YidC family. Type 1 subfamily. In terms of assembly, interacts with the Sec translocase complex via SecD. Specifically interacts with transmembrane segments of nascent integral membrane proteins during membrane integration.

The protein resides in the cell inner membrane. In terms of biological role, required for the insertion and/or proper folding and/or complex formation of integral membrane proteins into the membrane. Involved in integration of membrane proteins that insert both dependently and independently of the Sec translocase complex, as well as at least some lipoproteins. Aids folding of multispanning membrane proteins. The polypeptide is Membrane protein insertase YidC (Francisella tularensis subsp. tularensis (strain SCHU S4 / Schu 4)).